Consider the following 337-residue polypeptide: Glyceraldehyde-3-phosphate dehydrogenase (337 aa).

Residues Arg-11–Ile-12, Asp-33, and Lys-78 contribute to the NAD(+) site. D-glyceraldehyde 3-phosphate-binding positions include Ser-149–Thr-151, Thr-180, Thr-209–Gly-210, and Arg-232. Catalysis depends on Cys-150, which acts as the Nucleophile. Asn-314 contacts NAD(+).

It belongs to the glyceraldehyde-3-phosphate dehydrogenase family. Homotetramer.

It is found in the cytoplasm. The enzyme catalyses D-glyceraldehyde 3-phosphate + phosphate + NAD(+) = (2R)-3-phospho-glyceroyl phosphate + NADH + H(+). It participates in carbohydrate degradation; glycolysis; pyruvate from D-glyceraldehyde 3-phosphate: step 1/5. In Lyophyllum shimeji (Hon-shimeji), this protein is Glyceraldehyde-3-phosphate dehydrogenase (GPD).